A 293-amino-acid chain; its full sequence is Formamidopyrimidine-DNA glycosylase (293 aa).

Pro2 functions as the Schiff-base intermediate with DNA in the catalytic mechanism. The Proton donor role is filled by Glu3. Lys58 functions as the Proton donor; for beta-elimination activity in the catalytic mechanism. Residues His104, Arg127, and Arg170 each contribute to the DNA site. An FPG-type zinc finger spans residues 257–293 (SVYGREGKPCRNPACGGTVERVVQSGRSTFFCASCQT). Residue Arg283 is the Proton donor; for delta-elimination activity of the active site.

This sequence belongs to the FPG family. As to quaternary structure, monomer. The cofactor is Zn(2+).

The enzyme catalyses Hydrolysis of DNA containing ring-opened 7-methylguanine residues, releasing 2,6-diamino-4-hydroxy-5-(N-methyl)formamidopyrimidine.. It catalyses the reaction 2'-deoxyribonucleotide-(2'-deoxyribose 5'-phosphate)-2'-deoxyribonucleotide-DNA = a 3'-end 2'-deoxyribonucleotide-(2,3-dehydro-2,3-deoxyribose 5'-phosphate)-DNA + a 5'-end 5'-phospho-2'-deoxyribonucleoside-DNA + H(+). In terms of biological role, involved in base excision repair of DNA damaged by oxidation or by mutagenic agents. Acts as a DNA glycosylase that recognizes and removes damaged bases. Has a preference for oxidized purines, such as 7,8-dihydro-8-oxoguanine (8-oxoG). Has AP (apurinic/apyrimidinic) lyase activity and introduces nicks in the DNA strand. Cleaves the DNA backbone by beta-delta elimination to generate a single-strand break at the site of the removed base with both 3'- and 5'-phosphates. The sequence is that of Formamidopyrimidine-DNA glycosylase from Brucella ovis (strain ATCC 25840 / 63/290 / NCTC 10512).